Reading from the N-terminus, the 80-residue chain is Acyl carrier protein (80 aa).

Residues 1 to 79 (MTEEEIFNKI…EAVEYIKSHQ (79 aa)) enclose the Carrier domain. Residue Ser39 is modified to O-(pantetheine 4'-phosphoryl)serine.

The protein belongs to the acyl carrier protein (ACP) family. 4'-phosphopantetheine is transferred from CoA to a specific serine of apo-ACP by AcpS. This modification is essential for activity because fatty acids are bound in thioester linkage to the sulfhydryl of the prosthetic group.

It localises to the cytoplasm. The protein operates within lipid metabolism; fatty acid biosynthesis. Carrier of the growing fatty acid chain in fatty acid biosynthesis. This chain is Acyl carrier protein, found in Lactobacillus johnsonii (strain CNCM I-12250 / La1 / NCC 533).